The primary structure comprises 1004 residues: Unconventional myosin-Id (1004 aa).

In terms of domain architecture, Myosin motor spans 9 to 695 (FGKADFVLLD…TIFSLEEQRA (687 aa)). Residue 102 to 109 (GESGAGKT) participates in ATP binding. Residues 572 to 594 (MISLVEKLASKEPYYVRCIKPND) are actin-binding. 2 consecutive IQ domains span residues 699 to 719 (KRIV…MRYR) and 721 to 741 (MRAA…SYIR). The TH1 domain maps to 812 to 1003 (GQRADLGLQR…RSGYILSVPG (192 aa)).

It belongs to the TRAFAC class myosin-kinesin ATPase superfamily. Myosin family. In terms of assembly, interacts (via the two IQ motifs) with calmodulin. Interacts with F-actin.

It localises to the cytoplasm. It is found in the perikaryon. Its subcellular location is the cell projection. The protein resides in the dendrite. The protein localises to the early endosome. It localises to the cell cortex. Unconventional myosin that functions as actin-based motor protein with ATPase activity. Plays a role in the formation of Kupffer's vesicle, an organ that functions as a left-right organizer during embryogenesis. Plays a role in vesicular trafficking events that are required for normal lumen expansion of Kupffer's vesicle. Required for normal orientation of cilia in Kupffer's vesicle, and thus for normal, unidirectional circular flow and normal angular flow velocity, which then mediates asymmetric gene expression and left-right asymmetric development. Plays a role in endosomal protein trafficking, and especially in the transfer of cargo proteins from early to recycling endosomes. Required for normal planar cell polarity in ciliated cells, for normal rotational polarity of cilia, and for coordinated, unidirectional ciliary movement. The chain is Unconventional myosin-Id (myo1d) from Danio rerio (Zebrafish).